The primary structure comprises 348 residues: GTPase Obg 1 (348 aa).

One can recognise an Obg domain in the interval 1-159 (MSFVDEAKIH…HCVLLKLKIV (159 aa)). The 170-residue stretch at 160–329 (SDVGIIGMPN…LHAQVKKAVV (170 aa)) folds into the OBG-type G domain. GTP contacts are provided by residues 166–173 (GMPNAGKS), 191–195 (FTTLE), 212–215 (DIPG), 279–282 (NKCD), and 310–312 (GDE). Positions 173 and 193 each coordinate Mg(2+).

It belongs to the TRAFAC class OBG-HflX-like GTPase superfamily. OBG GTPase family. As to quaternary structure, monomer. It depends on Mg(2+) as a cofactor.

The protein resides in the cytoplasm. Its function is as follows. An essential GTPase which binds GTP, GDP and possibly (p)ppGpp with moderate affinity, with high nucleotide exchange rates and a fairly low GTP hydrolysis rate. Plays a role in control of the cell cycle, stress response, ribosome biogenesis and in those bacteria that undergo differentiation, in morphogenesis control. This is GTPase Obg 1 from Anaplasma marginale (strain St. Maries).